The chain runs to 291 residues: Phosphatidylserine decarboxylase proenzyme (291 aa).

Active-site charge relay system; for autoendoproteolytic cleavage activity residues include D90, H147, and S253. S253 acts as the Schiff-base intermediate with substrate; via pyruvic acid; for decarboxylase activity in catalysis. Position 253 is a pyruvic acid (Ser); by autocatalysis (S253).

The protein belongs to the phosphatidylserine decarboxylase family. PSD-B subfamily. Prokaryotic type I sub-subfamily. In terms of assembly, heterodimer of a large membrane-associated beta subunit and a small pyruvoyl-containing alpha subunit. The cofactor is pyruvate. In terms of processing, is synthesized initially as an inactive proenzyme. Formation of the active enzyme involves a self-maturation process in which the active site pyruvoyl group is generated from an internal serine residue via an autocatalytic post-translational modification. Two non-identical subunits are generated from the proenzyme in this reaction, and the pyruvate is formed at the N-terminus of the alpha chain, which is derived from the carboxyl end of the proenzyme. The autoendoproteolytic cleavage occurs by a canonical serine protease mechanism, in which the side chain hydroxyl group of the serine supplies its oxygen atom to form the C-terminus of the beta chain, while the remainder of the serine residue undergoes an oxidative deamination to produce ammonia and the pyruvoyl prosthetic group on the alpha chain. During this reaction, the Ser that is part of the protease active site of the proenzyme becomes the pyruvoyl prosthetic group, which constitutes an essential element of the active site of the mature decarboxylase.

It localises to the cell membrane. The enzyme catalyses a 1,2-diacyl-sn-glycero-3-phospho-L-serine + H(+) = a 1,2-diacyl-sn-glycero-3-phosphoethanolamine + CO2. Its pathway is phospholipid metabolism; phosphatidylethanolamine biosynthesis; phosphatidylethanolamine from CDP-diacylglycerol: step 2/2. Functionally, catalyzes the formation of phosphatidylethanolamine (PtdEtn) from phosphatidylserine (PtdSer). This chain is Phosphatidylserine decarboxylase proenzyme, found in Photobacterium profundum (strain SS9).